Consider the following 424-residue polypeptide: L-glutamine:scyllo-inosose aminotransferase (424 aa).

Residues 1 to 21 (MDSSLAISGGPRLSNREWPRW) are disordered. An N6-(pyridoxal phosphate)lysine modification is found at K202.

It belongs to the DegT/DnrJ/EryC1 family. L-glutamine:2-deoxy-scyllo-inosose/scyllo-inosose aminotransferase subfamily. In terms of assembly, homodimer. Pyridoxal 5'-phosphate is required as a cofactor.

It catalyses the reaction scyllo-inosose + L-glutamine = 1-amino-1-deoxy-scyllo-inositol + 2-oxoglutaramate. It participates in antibiotic biosynthesis; streptomycin biosynthesis. Functionally, catalyzes the PLP-dependent transamination of scyllo-inosose to form scyllo-inosamine. In Streptomyces griseus, this protein is L-glutamine:scyllo-inosose aminotransferase (stsC).